The chain runs to 209 residues: Redox-sensing transcriptional repressor Rex (209 aa).

Residues 16-55 constitute a DNA-binding region (H-T-H motif); that stretch reads LYYRFIQNLSLSGKQRVSSAELSEAVKVDSATIRRDFSYF. An NAD(+)-binding site is contributed by 90-95; sequence GVGNLG.

It belongs to the transcriptional regulatory Rex family. Homodimer.

The protein resides in the cytoplasm. Modulates transcription in response to changes in cellular NADH/NAD(+) redox state. This is Redox-sensing transcriptional repressor Rex from Bacillus mycoides (strain KBAB4) (Bacillus weihenstephanensis).